The sequence spans 396 residues: Chalcone synthase A (396 aa).

Cysteine 170 is a catalytic residue.

This sequence belongs to the thiolase-like superfamily. Chalcone/stilbene synthases family.

It carries out the reaction (E)-4-coumaroyl-CoA + 3 malonyl-CoA + 3 H(+) = 2',4,4',6'-tetrahydroxychalcone + 3 CO2 + 4 CoA. It participates in secondary metabolite biosynthesis; flavonoid biosynthesis. Its function is as follows. The primary product of this enzyme is 4,2',4',6'-tetrahydroxychalcone (also termed naringenin-chalcone or chalcone) which can under specific conditions spontaneously isomerize into naringenin. This is Chalcone synthase A (CHSA) from Ipomoea purpurea (Common morning glory).